We begin with the raw amino-acid sequence, 342 residues long: N-acetyl-gamma-glutamyl-phosphate reductase (342 aa).

The active site involves Cys-146.

It belongs to the NAGSA dehydrogenase family. Type 1 subfamily.

It is found in the cytoplasm. It carries out the reaction N-acetyl-L-glutamate 5-semialdehyde + phosphate + NADP(+) = N-acetyl-L-glutamyl 5-phosphate + NADPH + H(+). It functions in the pathway amino-acid biosynthesis; L-arginine biosynthesis; N(2)-acetyl-L-ornithine from L-glutamate: step 3/4. Its function is as follows. Catalyzes the NADPH-dependent reduction of N-acetyl-5-glutamyl phosphate to yield N-acetyl-L-glutamate 5-semialdehyde. This chain is N-acetyl-gamma-glutamyl-phosphate reductase, found in Streptomyces avermitilis (strain ATCC 31267 / DSM 46492 / JCM 5070 / NBRC 14893 / NCIMB 12804 / NRRL 8165 / MA-4680).